The following is a 322-amino-acid chain: Digestive cysteine proteinase 1 (322 aa).

The N-terminal stretch at 1–16 is a signal peptide; it reads MKVVALFLFGLALAAA. A propeptide spans 17–105 (activation peptide); the sequence is NPSWEEFKGK…VFTSTDAAPE (89 aa). 3 disulfide bridges follow: Cys126/Cys170, Cys160/Cys203, and Cys262/Cys311. Cys129 is a catalytic residue. Active-site residues include His269 and Asn289.

The protein belongs to the peptidase C1 family.

Inhibited by E-64, antipain, leupeptin, heavy metal ions, iodoacetic acid, dithionitrobenzene, p-hydroxymercuri-benzoate; activated by mercaptoethanol and dithiothreitol. The sequence is that of Digestive cysteine proteinase 1 (LCP1) from Homarus americanus (American lobster).